A 260-amino-acid chain; its full sequence is Ribonuclease HII (260 aa).

One can recognise an RNase H type-2 domain in the interval 70–260 (QAIAGIDEVG…PIKSMLKEKN (191 aa)). A divalent metal cation is bound by residues D76, E77, and D171.

This sequence belongs to the RNase HII family. Mn(2+) is required as a cofactor. Requires Mg(2+) as cofactor.

The protein localises to the cytoplasm. The catalysed reaction is Endonucleolytic cleavage to 5'-phosphomonoester.. Its function is as follows. Endonuclease that specifically degrades the RNA of RNA-DNA hybrids. This chain is Ribonuclease HII, found in Streptococcus mutans serotype c (strain ATCC 700610 / UA159).